Here is a 119-residue protein sequence, read N- to C-terminus: Multidrug resistance protein EbrB (119 aa).

4 helical membrane-spanning segments follow: residues 3–23 (GMIF…MLKL), 31–51 (LPAA…SFSL), 59–79 (AYAT…HFIF), and 81–101 (EPFN…VFLL).

Belongs to the drug/metabolite transporter (DMT) superfamily. Small multidrug resistance (SMR) (TC 2.A.7.1) family. EbrA/EbrB subfamily. As to quaternary structure, the efflux pump is composed of EbrA and EbrB.

The protein resides in the cell membrane. Part of a multidrug efflux pump. Confers resistance to cationic lipophilic dyes such as ethidium bromide, acriflavine, pyronine Y and safranin O. The efflux is probably coupled to an influx of protons. The sequence is that of Multidrug resistance protein EbrB (ebrB) from Bacillus licheniformis (strain ATCC 14580 / DSM 13 / JCM 2505 / CCUG 7422 / NBRC 12200 / NCIMB 9375 / NCTC 10341 / NRRL NRS-1264 / Gibson 46).